The following is a 211-amino-acid chain: N-(5'-phosphoribosyl)anthranilate isomerase (211 aa).

Belongs to the TrpF family.

The enzyme catalyses N-(5-phospho-beta-D-ribosyl)anthranilate = 1-(2-carboxyphenylamino)-1-deoxy-D-ribulose 5-phosphate. The protein operates within amino-acid biosynthesis; L-tryptophan biosynthesis; L-tryptophan from chorismate: step 3/5. This Pseudomonas paraeruginosa (strain DSM 24068 / PA7) (Pseudomonas aeruginosa (strain PA7)) protein is N-(5'-phosphoribosyl)anthranilate isomerase.